The sequence spans 193 residues: Large ribosomal subunit protein uL18 (193 aa).

Belongs to the universal ribosomal protein uL18 family. In terms of assembly, part of the 50S ribosomal subunit. Contacts the 5S and 23S rRNAs.

Functionally, this is one of the proteins that bind and probably mediate the attachment of the 5S RNA into the large ribosomal subunit, where it forms part of the central protuberance. This chain is Large ribosomal subunit protein uL18, found in Methanococcus maripaludis (strain DSM 14266 / JCM 13030 / NBRC 101832 / S2 / LL).